The chain runs to 72 residues: Conotoxin VnMKLT2-0221 (72 aa).

An N-terminal signal peptide occupies residues 1–22 (MKLTCVLIVAVLFLTACQLTTA). Positions 23–45 (ASYARSERQHPDLGSSDQNSKLT) are excised as a propeptide. The tract at residues 26–45 (ARSERQHPDLGSSDQNSKLT) is disordered. Disulfide bonds link cysteine 48/cysteine 62, cysteine 55/cysteine 66, and cysteine 61/cysteine 71.

It belongs to the conotoxin O1 superfamily. As to expression, expressed by the venom duct.

It is found in the secreted. The sequence is that of Conotoxin VnMKLT2-0221 from Conus ventricosus (Mediterranean cone).